Consider the following 150-residue polypeptide: UPF0178 protein Shewana3_1627 (150 aa).

Belongs to the UPF0178 family.

The chain is UPF0178 protein Shewana3_1627 from Shewanella sp. (strain ANA-3).